The chain runs to 176 residues: Methylated-DNA--protein-cysteine methyltransferase (176 aa).

The Nucleophile; methyl group acceptor role is filled by cysteine 142.

This sequence belongs to the MGMT family.

It is found in the cytoplasm. The catalysed reaction is a 6-O-methyl-2'-deoxyguanosine in DNA + L-cysteinyl-[protein] = S-methyl-L-cysteinyl-[protein] + a 2'-deoxyguanosine in DNA. It carries out the reaction a 4-O-methyl-thymidine in DNA + L-cysteinyl-[protein] = a thymidine in DNA + S-methyl-L-cysteinyl-[protein]. Involved in the cellular defense against the biological effects of O6-methylguanine (O6-MeG) and O4-methylthymine (O4-MeT) in DNA. Repairs the methylated nucleobase in DNA by stoichiometrically transferring the methyl group to a cysteine residue in the enzyme. This is a suicide reaction: the enzyme is irreversibly inactivated. This chain is Methylated-DNA--protein-cysteine methyltransferase, found in Methanothermobacter thermautotrophicus (strain ATCC 29096 / DSM 1053 / JCM 10044 / NBRC 100330 / Delta H) (Methanobacterium thermoautotrophicum).